We begin with the raw amino-acid sequence, 122 residues long: Small ribosomal subunit protein uS13 (122 aa).

The segment at 93–122 (RRGLPVRGQRTKTNARTRKGPKKTIAGKKK) is disordered.

The protein belongs to the universal ribosomal protein uS13 family. Part of the 30S ribosomal subunit. Forms a loose heterodimer with protein S19. Forms two bridges to the 50S subunit in the 70S ribosome.

Located at the top of the head of the 30S subunit, it contacts several helices of the 16S rRNA. In the 70S ribosome it contacts the 23S rRNA (bridge B1a) and protein L5 of the 50S subunit (bridge B1b), connecting the 2 subunits; these bridges are implicated in subunit movement. Contacts the tRNAs in the A and P-sites. In Corynebacterium kroppenstedtii (strain DSM 44385 / JCM 11950 / CIP 105744 / CCUG 35717), this protein is Small ribosomal subunit protein uS13.